Here is a 388-residue protein sequence, read N- to C-terminus: uncharacterized protein (388 aa).

Its subcellular location is the mitochondrion. This is an uncharacterized protein from Dictyostelium citrinum (Slime mold).